We begin with the raw amino-acid sequence, 178 residues long: Caveolin-1 (178 aa).

Position 2 is an N-acetylserine (Ser-2). Ser-2 is modified (phosphoserine). A required for homooligomerization region spans residues 2 to 94 (SGGKYVDSEG…WKASFTTFTV (93 aa)). Residues 2 to 104 (SGGKYVDSEG…TKYWFYRLLS (103 aa)) lie on the Cytoplasmic side of the membrane. The residue at position 5 (Lys-5) is an N6-acetyllysine; alternate. Lys-5 is covalently cross-linked (Glycyl lysine isopeptide (Lys-Gly) (interchain with G-Cter in ubiquitin); alternate). Tyr-6 bears the Phosphotyrosine mark. A Phosphoserine modification is found at Ser-9. Residue Tyr-14 is modified to Phosphotyrosine; by ABL1. A Phosphotyrosine modification is found at Tyr-25. Residues Lys-26, Lys-30, Lys-39, Lys-47, and Lys-57 each participate in a glycyl lysine isopeptide (Lys-Gly) (interchain with G-Cter in ubiquitin) cross-link. An interaction with CAVIN3 region spans residues 82–94 (DGIWKASFTTFTV). The helical intramembrane region spans 105–125 (ALFGIPMALIWGIYFAILSFL). Residues 126–178 (HIWAVVPCIKSFLIEIQCISRVYSIYVHTFCDPLFEAIGKIFSNIRINMQKEI) are Cytoplasmic-facing. Residues 131-142 (VPCIKSFLIEIQ) form an interacts with SPRY1, SPRY2, SPRY3 and SPRY4 region. S-palmitoyl cysteine attachment occurs at residues Cys-133, Cys-143, and Cys-156. The interval 149-160 (SIYVHTFCDPLF) is interacts with SPRY1, SPRY2, and SPRY4. The tract at residues 167 to 178 (FSNIRINMQKEI) is interacts with SPRY1, SPRY2, SPRY3 and SPRY4.

It belongs to the caveolin family. Homooligomer. Interacts with GLIPR2. Interacts with NOSTRIN. Interacts with SNAP25 and STX1A. Interacts (via the N-terminus) with DPP4; the interaction is direct. Interacts with CTNNB1, CDH1 and JUP. Interacts with PACSIN2; this interaction induces membrane tubulation. Interacts with SLC7A9. Interacts with BMX and BTK. Interacts with TGFBR1. Interacts with CAVIN3 (via leucine-zipper domain) in a cholesterol-sensitive manner. Interacts with CAVIN1. Interacts with EHD2 in a cholesterol-dependent manner. Forms a ternary complex with UBXN6 and VCP; mediates CAV1 targeting to lysosomes for degradation. Interacts with ABCG1; this interaction regulates ABCG1-mediated cholesterol efflux. Interacts with NEU3; this interaction enhances NEU3 sialidase activity within caveola. Interacts (via C-terminus) with SPRY1, SPRY2 (via C-terminus), SPRY3, and SPRY4. Interacts with IGFBP5; this interaction allows trafficking of IGFBP5 from the plasma membrane to the nucleus. In terms of processing, phosphorylated at Tyr-14 by ABL1 in response to oxidative stress. Ubiquitinated. Undergo monoubiquitination and multi- and/or polyubiquitination. Monoubiquitination of N-terminal lysines promotes integration in a ternary complex with UBXN6 and VCP which promotes oligomeric CAV1 targeting to lysosomes for degradation. Ubiquitinated by ZNRF1; leading to degradation and modulation of the TLR4-mediated immune response.

It is found in the golgi apparatus membrane. The protein resides in the cell membrane. Its subcellular location is the membrane. The protein localises to the caveola. It localises to the membrane raft. In terms of biological role, may act as a scaffolding protein within caveolar membranes. Forms a stable heterooligomeric complex with CAV2 that targets to lipid rafts and drives caveolae formation. Mediates the recruitment of CAVIN proteins (CAVIN1/2/3/4) to the caveolae. Interacts directly with G-protein alpha subunits and can functionally regulate their activity. Involved in the costimulatory signal essential for T-cell receptor (TCR)-mediated T-cell activation. Its binding to DPP4 induces T-cell proliferation and NF-kappa-B activation in a T-cell receptor/CD3-dependent manner. Recruits CTNNB1 to caveolar membranes and may regulate CTNNB1-mediated signaling through the Wnt pathway. Negatively regulates TGFB1-mediated activation of SMAD2/3 by mediating the internalization of TGFBR1 from membrane rafts leading to its subsequent degradation. Binds 20(S)-hydroxycholesterol (20(S)-OHC). The polypeptide is Caveolin-1 (CAV1) (Muntiacus muntjak (Barking deer)).